We begin with the raw amino-acid sequence, 146 residues long: Meiotically up-regulated gene 96 protein (146 aa).

Residues 85-104 (LIRYSLILTCLVAILLSVLW) form a helical membrane-spanning segment.

Its subcellular location is the cytoplasm. The protein resides in the membrane. Functionally, has a role in meiosis. In Schizosaccharomyces pombe (strain 972 / ATCC 24843) (Fission yeast), this protein is Meiotically up-regulated gene 96 protein (mug96).